The sequence spans 1536 residues: Tyrosine-protein kinase BAZ1B (1536 aa).

A WAC domain is found at 25-130 (EVYTIEHTKE…GEKCDLMVGN (106 aa)). Disordered regions lie at residues 144-207 (LENP…TTMK), 304-470 (PSTK…GKPF), and 557-579 (LREKAKERREKEMQVRREMSRRY). Basic and acidic residues-rich tracts occupy residues 151-196 (NAEK…DRAR) and 334-343 (AKGDKKKNKD). Residues 344–355 (SQNIPLSPTIWS) are compositionally biased toward polar residues. The span at 392 to 401 (KQGDKKSSDP) shows a compositional bias: basic and acidic residues. The span at 443-452 (AKSPAAAGSP) shows a compositional bias: low complexity. A coiled-coil region spans residues 515–583 (EELKELVQKR…EMSRRYEDQE (69 aa)). The DDT domain occupies 603–667 (NTIFGDVAMV…LQTLLQDELA (65 aa)). Coiled coils occupy residues 768–803 (HQKSAEMWKERVATLKEANDRKRAEKQKRKEQMETK) and 850–890 (IQAK…FQDA). The span at 785–832 (ANDRKRAEKQKRKEQMETKTDGDVLIKAEKKKESTVKKETPKVLPKEE) shows a compositional bias: basic and acidic residues. The segment at 785–839 (ANDRKRAEKQKRKEQMETKTDGDVLIKAEKKKESTVKKETPKVLPKEEPEPEDMI) is disordered. The interval 940-973 (PPEEEPVLTEEEEEEEEVKKEEETEDGEKEDEGS) is disordered. 2 stretches are compositionally biased toward acidic residues: residues 941–955 (PEEEPVLTEEEEEEE) and 962–972 (ETEDGEKEDEG). The PHD-type zinc-finger motif lies at 1202–1252 (NARCKVCRRKGEDDKLILCDECNKAFHLFCLRPALYRIPAGEWLCPACQPT). Disordered stretches follow at residues 1256–1371 (RSSR…KDVE) and 1477–1536 (LRRR…TKQK). Positions 1261 to 1293 (RNYKEDSEEEEDSEEEDEEESEEEDSEEEHRNT) form a coiled coil. Over residues 1266–1287 (DSEEEEDSEEEDEEESEEEDSE) the composition is skewed to acidic residues. The span at 1297-1316 (LRSRKKVKTSSKSKMQKKPA) shows a compositional bias: basic residues. The segment covering 1325 to 1350 (KTDTNPSKTSPKSSAKPKSRAAPSSP) has biased composition (low complexity). Residue S1349 is modified to Phosphoserine. The Bromo domain maps to 1366 to 1470 (RKKDVELQKC…EAFVELLQKS (105 aa)). A compositionally biased stretch (acidic residues) spans 1491–1502 (NSDDDDDDEEED). Basic residues predominate over residues 1506-1524 (KKQKNGKQGKKASSKRKVE). A compositionally biased stretch (basic and acidic residues) spans 1525–1536 (HSRTEKYQTKQK).

It belongs to the WAL family. BAZ1B subfamily. In terms of assembly, interacts with smarca5/snf2h; the interaction is direct and forms the WICH complex. Component of the B-WICH complex. Requires Mn(2+) as cofactor.

It localises to the nucleus. It catalyses the reaction L-tyrosyl-[protein] + ATP = O-phospho-L-tyrosyl-[protein] + ADP + H(+). In terms of biological role, atypical tyrosine-protein kinase that plays a central role in chromatin remodeling and acts as a transcription regulator. Involved in DNA damage response by phosphorylating 'Tyr-142' of histone H2AX (H2AXY142ph). H2AXY142ph plays a central role in DNA repair and acts as a mark that distinguishes between apoptotic and repair responses to genotoxic stress. Essential component of the WICH complex, a chromatin remodeling complex that mobilizes nucleosomes and reconfigures irregular chromatin to a regular nucleosomal array structure. The WICH complex regulates the transcription of various genes, has a role in RNA polymerase I and RNA polymerase III transcription, mediates the histone H2AX phosphorylation at 'Tyr-142', and is involved in the maintenance of chromatin structures during DNA replication processes. This Danio rerio (Zebrafish) protein is Tyrosine-protein kinase BAZ1B (baz1b).